The following is a 234-amino-acid chain: MMRSRFLLFIVFFSLSLFISSLIASDLGFCNEEMALVGGVGDVPANQNSGEVESLARFAVDEHNKKENALLEFARVVKAKEQVVAGTLHHLTLEILEAGQKKLYEAKVWVKPWLNFKELQEFKPASDAPAITSSDLGCKQGEHESGWREVPGDDPEVKHVAEQAVKTIQQRSNSLFPYELLEVVHAKAEVTGEAAKYNMLLKLKRGEKEEKFKVEVHKNHEGALHLNHAEQHHD.

A signal peptide spans 1-24 (MMRSRFLLFIVFFSLSLFISSLIA). Methionine 2 carries the N-acetylalanine modification. Cystatin domains lie at 38–126 (GGVG…KPAS) and 145–215 (SGWR…FKVE). A Secondary area of contact motif is present at residues 82–86 (QVVAG). The tract at residues 133-154 (SSDLGCKQGEHESGWREVPGDD) is disordered. Positions 140–154 (QGEHESGWREVPGDD) are enriched in basic and acidic residues. Serine 174 bears the Phosphoserine mark.

This sequence belongs to the cystatin family. Phytocystatin subfamily.

The protein localises to the secreted. In terms of biological role, specific inhibitor of cysteine proteinases. Probably involved in the regulation of endogenous processes and in defense against pests and pathogens. The chain is Cysteine proteinase inhibitor 6 (CYS6) from Arabidopsis thaliana (Mouse-ear cress).